We begin with the raw amino-acid sequence, 406 residues long: Acetylornithine aminotransferase (406 aa).

Residues 108-109 and Phe-141 contribute to the pyridoxal 5'-phosphate site; that span reads GA. Arg-144 contacts N(2)-acetyl-L-ornithine. Residue 226 to 229 coordinates pyridoxal 5'-phosphate; it reads DEVQ. The residue at position 255 (Lys-255) is an N6-(pyridoxal phosphate)lysine. Residue Thr-283 participates in N(2)-acetyl-L-ornithine binding. Thr-284 is a pyridoxal 5'-phosphate binding site.

It belongs to the class-III pyridoxal-phosphate-dependent aminotransferase family. ArgD subfamily. As to quaternary structure, homodimer. Pyridoxal 5'-phosphate serves as cofactor.

The protein resides in the cytoplasm. The enzyme catalyses N(2)-acetyl-L-ornithine + 2-oxoglutarate = N-acetyl-L-glutamate 5-semialdehyde + L-glutamate. Its pathway is amino-acid biosynthesis; L-arginine biosynthesis; N(2)-acetyl-L-ornithine from L-glutamate: step 4/4. This is Acetylornithine aminotransferase from Pseudomonas putida (strain ATCC 47054 / DSM 6125 / CFBP 8728 / NCIMB 11950 / KT2440).